The chain runs to 66 residues: Large ribosomal subunit protein bL35 (66 aa).

A disordered region spans residues 20–41; the sequence is GKVMSAQRGKRHGMIKRTKKQI. The segment covering 27–41 has biased composition (basic residues); sequence RGKRHGMIKRTKKQI.

Belongs to the bacterial ribosomal protein bL35 family.

This is Large ribosomal subunit protein bL35 from Rhodopseudomonas palustris (strain BisB5).